The primary structure comprises 688 residues: Translation initiation factor IF-2 (688 aa).

The disordered stretch occupies residues 62 to 103 (EFEVEEKVVRSKKNSNKKKKKGKGNEDKRQDNFAGRQQTQIV). The span at 71-83 (RSKKNSNKKKKKG) shows a compositional bias: basic residues. The tr-type G domain occupies 190 to 359 (ERPAVVTIMG…LLVSEVEEYK (170 aa)). A G1 region spans residues 199-206 (GHVDHGKT). A GTP-binding site is contributed by 199 to 206 (GHVDHGKT). The interval 224-228 (GITQH) is G2. Residues 245-248 (DTPG) form a G3 region. Residues 245 to 249 (DTPGH) and 299 to 302 (NKMD) each bind GTP. The G4 stretch occupies residues 299 to 302 (NKMD). Residues 335–337 (SAI) are G5.

This sequence belongs to the TRAFAC class translation factor GTPase superfamily. Classic translation factor GTPase family. IF-2 subfamily.

Its subcellular location is the cytoplasm. Functionally, one of the essential components for the initiation of protein synthesis. Protects formylmethionyl-tRNA from spontaneous hydrolysis and promotes its binding to the 30S ribosomal subunits. Also involved in the hydrolysis of GTP during the formation of the 70S ribosomal complex. This is Translation initiation factor IF-2 from Bacillus cereus (strain G9842).